The sequence spans 635 residues: Chaperone protein DnaK (635 aa).

Threonine 198 carries the phosphothreonine; by autocatalysis modification. The tract at residues 606-635 (QATAASPGAEAPKADDDVVDAEFSEVDENK) is disordered. Residues 622 to 635 (DVVDAEFSEVDENK) are compositionally biased toward acidic residues.

This sequence belongs to the heat shock protein 70 family.

Functionally, acts as a chaperone. In Novosphingobium aromaticivorans (strain ATCC 700278 / DSM 12444 / CCUG 56034 / CIP 105152 / NBRC 16084 / F199), this protein is Chaperone protein DnaK.